The primary structure comprises 125 residues: Fluoride-specific ion channel FluC (125 aa).

Helical transmembrane passes span W4–L24, Y35–I55, L69–V89, and M103–S123. The Na(+) site is built by G75 and T78.

The protein belongs to the fluoride channel Fluc/FEX (TC 1.A.43) family.

The protein resides in the cell inner membrane. The enzyme catalyses fluoride(in) = fluoride(out). Its activity is regulated as follows. Na(+) is not transported, but it plays an essential structural role and its presence is essential for fluoride channel function. Its function is as follows. Fluoride-specific ion channel. Important for reducing fluoride concentration in the cell, thus reducing its toxicity. This is Fluoride-specific ion channel FluC from Aeromonas salmonicida (strain A449).